A 665-amino-acid chain; its full sequence is E3 ubiquitin-protein ligase cblA (665 aa).

The disordered stretch occupies residues 30–50; the sequence is NNNNNINNNNNNNNINSNNNG. The interval 109 to 231 is 4H; that stretch reads TSLVNYIHYE…NNENNNNNNN (123 aa). Residues 109 to 400 form the Cbl-PTB domain; it reads TSLVNYIHYE…PDIFKSILSF (292 aa). An EF-hand-like region spans residues 232 to 306; sequence NYNPYELLSN…FKLSVFIKWF (75 aa). The Ca(2+) site is built by Asp-287, Thr-289, Asp-291, and Tyr-293. Residues 307 to 400 are SH2-like; sequence GALPVSLGIF…PDIFKSILSF (94 aa). 2 disordered regions span residues 437–456 and 467–609; these read ENNN…INTF and DSSN…NNNN. Low complexity predominate over residues 467 to 478; it reads DSSNSSDTNKSP. The stretch at 479-544 forms a coiled coil; sequence TKSRKSSFKN…NNNNNNNNNN (66 aa). Residues 486–512 are compositionally biased toward basic and acidic residues; sequence FKNDKDKKEKEKEKGKDKEKEKERVSD. 2 stretches are compositionally biased toward low complexity: residues 530–561 and 571–609; these read NNNN…NNNN and TSNG…NNNN. The RING-type zinc finger occupies 618-653; sequence CTVCMDNEINTVFLECGHLSCCSLCSVKLKKCPICR.

In terms of processing, ubiquitinated.

It is found in the cytoplasm. It localises to the nucleus. The catalysed reaction is S-ubiquitinyl-[E2 ubiquitin-conjugating enzyme]-L-cysteine + [acceptor protein]-L-lysine = [E2 ubiquitin-conjugating enzyme]-L-cysteine + N(6)-ubiquitinyl-[acceptor protein]-L-lysine.. The protein operates within protein modification; protein ubiquitination. Acts as an E3 ubiquitin-protein ligase, which accepts ubiquitin from specific E2 ubiquitin-conjugating enzymes, and then transfers it to substrates promoting their degradation by the proteasome. Up-regulates STATc tyrosine phosphorylation via an inhibitory effect on ptpC accumulation. Recognizes activated receptor tyrosine kinases, RTKs and terminates signaling. This Dictyostelium discoideum (Social amoeba) protein is E3 ubiquitin-protein ligase cblA (cblA-1).